Reading from the N-terminus, the 273-residue chain is NH(3)-dependent NAD(+) synthetase (273 aa).

45–52 contacts ATP; sequence GISGGQDS. Aspartate 51 contributes to the Mg(2+) binding site. Position 139 (arginine 139) interacts with deamido-NAD(+). Threonine 159 is a binding site for ATP. Position 164 (glutamate 164) interacts with Mg(2+). Lysine 172 and aspartate 179 together coordinate deamido-NAD(+). ATP is bound by residues lysine 188 and threonine 210. 259 to 260 is a deamido-NAD(+) binding site; sequence HK.

The protein belongs to the NAD synthetase family. In terms of assembly, homodimer.

The catalysed reaction is deamido-NAD(+) + NH4(+) + ATP = AMP + diphosphate + NAD(+) + H(+). It functions in the pathway cofactor biosynthesis; NAD(+) biosynthesis; NAD(+) from deamido-NAD(+) (ammonia route): step 1/1. In terms of biological role, catalyzes the ATP-dependent amidation of deamido-NAD to form NAD. Uses ammonia as a nitrogen source. The sequence is that of NH(3)-dependent NAD(+) synthetase from Bacillus pumilus (strain SAFR-032).